The sequence spans 349 residues: Autophagy-related protein 3 (349 aa).

The tract at residues Ala-95 to Asn-173 is flexible region. Catalysis depends on Cys-244, which acts as the Glycyl thioester intermediate. A handle region region spans residues Ser-248 to Gln-325. The short motif at Trp-306–Val-309 is the ATG8 interaction motif (AIM) element.

It belongs to the ATG3 family. In terms of assembly, monomer. Interacts with ATG8 through an intermediate thioester bond between Cys-244 and the C-terminal Gly of ATG8. Interacts with the C-terminal region of the E1-like ATG7 enzyme. Also interacts with the ATG12-ATG5 conjugate.

It is found in the cytoplasm. E2 conjugating enzyme required for the cytoplasm to vacuole transport (Cvt) and autophagy. Required for selective autophagic degradation of the nucleus (nucleophagy) as well as for mitophagy which contributes to regulate mitochondrial quantity and quality by eliminating the mitochondria to a basal level to fulfill cellular energy requirements and preventing excess ROS production. Responsible for the E2-like covalent binding of phosphatidylethanolamine to the C-terminal Gly of ATG8. The ATG12-ATG5 conjugate plays a role of an E3 and promotes the transfer of ATG8 from ATG3 to phosphatidylethanolamine (PE). This step is required for the membrane association of ATG8. The formation of the ATG8-phosphatidylethanolamine conjugate is essential for autophagy and for the cytoplasm to vacuole transport (Cvt). The ATG8-PE conjugate mediates tethering between adjacent membranes and stimulates membrane hemifusion, leading to expansion of the autophagosomal membrane during autophagy. Autophagy is required for proper vegetative growth, asexual/sexual reproduction, and full virulence. Autophagy is particularly involved in the biosynthesis of deoxynivalenol (DON), an important virulence determinant. The chain is Autophagy-related protein 3 from Gibberella zeae (strain ATCC MYA-4620 / CBS 123657 / FGSC 9075 / NRRL 31084 / PH-1) (Wheat head blight fungus).